Consider the following 224-residue polypeptide: Germin-like protein 8-10 (224 aa).

The signal sequence occupies residues 1-22 (MASPSICLLAALLALVSWQAIA). A disulfide bond links Cys-32 and Cys-47. The region spanning 62-212 (AMLDTPRKTN…AFQVEKGTID (151 aa)) is the Cupin type-1 domain. Asn-76 carries an N-linked (GlcNAc...) asparagine glycan. Mn(2+) contacts are provided by His-109, His-111, and Glu-116. Asn-135 carries N-linked (GlcNAc...) asparagine glycosylation. Residue His-157 participates in Mn(2+) binding.

Belongs to the germin family. Oligomer (believed to be a pentamer but probably hexamer).

The protein resides in the secreted. The protein localises to the extracellular space. Its subcellular location is the apoplast. Plays a role in broad-spectrum disease resistance. Probably has no oxalate oxidase activity even if the active site is conserved. The chain is Germin-like protein 8-10 (GLP2) from Oryza sativa subsp. japonica (Rice).